The primary structure comprises 354 residues: Probable L-ascorbate-6-phosphate lactonase UlaG (354 aa).

This sequence belongs to the UlaG family. The cofactor is a divalent metal cation.

It localises to the cytoplasm. The enzyme catalyses L-ascorbate 6-phosphate + H2O = 3-dehydro-L-gulonate 6-phosphate. The protein operates within cofactor degradation; L-ascorbate degradation; D-xylulose 5-phosphate from L-ascorbate: step 1/4. Its function is as follows. Probably catalyzes the hydrolysis of L-ascorbate-6-P into 3-keto-L-gulonate-6-P. Is essential for L-ascorbate utilization under anaerobic conditions. The chain is Probable L-ascorbate-6-phosphate lactonase UlaG from Escherichia coli (strain SMS-3-5 / SECEC).